Here is a 452-residue protein sequence, read N- to C-terminus: Biotin carboxylase (452 aa).

The Biotin carboxylation domain maps to 1–445 (MFKKVLIANR…TTAFVTNHLK (445 aa)). Residues lysine 116, lysine 158, 164-165 (GG), 200-203 (EKAV), histidine 208, and histidine 235 each bind ATP. One can recognise an ATP-grasp domain in the interval 120–317 (RTAMQTAGVP…LVEWQLLIAA (198 aa)). Lysine 237 lines the hydrogencarbonate pocket. ATP contacts are provided by glutamate 275 and glutamate 288. Mg(2+) contacts are provided by glutamate 275, glutamate 288, and asparagine 290. Mn(2+) contacts are provided by glutamate 275, glutamate 288, and asparagine 290. Hydrogencarbonate contacts are provided by arginine 292, valine 295, and arginine 338. The active site involves arginine 292. A biotin-binding site is contributed by arginine 338.

As to quaternary structure, acetyl-CoA carboxylase is a heterohexamer of biotin carboxyl carrier protein, biotin carboxylase and the two subunits of carboxyl transferase in a 2:2 complex. The cofactor is Mg(2+). Mn(2+) serves as cofactor.

The enzyme catalyses N(6)-biotinyl-L-lysyl-[protein] + hydrogencarbonate + ATP = N(6)-carboxybiotinyl-L-lysyl-[protein] + ADP + phosphate + H(+). The protein operates within lipid metabolism; malonyl-CoA biosynthesis; malonyl-CoA from acetyl-CoA: step 1/1. Functionally, this protein is a component of the acetyl coenzyme A carboxylase complex; first, biotin carboxylase catalyzes the carboxylation of the carrier protein and then the transcarboxylase transfers the carboxyl group to form malonyl-CoA. The protein is Biotin carboxylase (accC) of Halalkalibacterium halodurans (strain ATCC BAA-125 / DSM 18197 / FERM 7344 / JCM 9153 / C-125) (Bacillus halodurans).